The chain runs to 424 residues: Endoglucanase (424 aa).

The first 19 residues, 1 to 19 (MHRCMPLVAASMAALMLAG), serve as a signal peptide directing secretion. The N-palmitoyl cysteine moiety is linked to residue cysteine 20. Cysteine 20 carries S-diacylglycerol cysteine lipidation. Positions 20-43 (CGGGDGDTTLSTAAATDTTTLKTA) are excised as a propeptide. The active-site Proton donor is glutamate 247. The Nucleophile role is filled by glutamate 359.

It belongs to the glycosyl hydrolase 5 (cellulase A) family.

Its subcellular location is the cell membrane. It catalyses the reaction Endohydrolysis of (1-&gt;4)-beta-D-glucosidic linkages in cellulose, lichenin and cereal beta-D-glucans.. This Ralstonia nicotianae (strain ATCC BAA-1114 / GMI1000) (Ralstonia solanacearum) protein is Endoglucanase (egl).